We begin with the raw amino-acid sequence, 456 residues long: tRNA-2-methylthio-N(6)-dimethylallyladenosine synthase (456 aa).

The region spanning 9–126 is the MTTase N-terminal domain; sequence KKLYIKTHGC…LPEMMETKKS (118 aa). [4Fe-4S] cluster-binding residues include cysteine 18, cysteine 55, cysteine 89, cysteine 163, cysteine 167, and cysteine 170. Residues 149-381 enclose the Radical SAM core domain; the sequence is DADGVSAFVS…QDRITQQAMA (233 aa). The region spanning 384 to 448 is the TRAM domain; the sequence is RRMVGNTERI…PNSLRGSLIA (65 aa).

It belongs to the methylthiotransferase family. MiaB subfamily. As to quaternary structure, monomer. It depends on [4Fe-4S] cluster as a cofactor.

The protein localises to the cytoplasm. It catalyses the reaction N(6)-dimethylallyladenosine(37) in tRNA + (sulfur carrier)-SH + AH2 + 2 S-adenosyl-L-methionine = 2-methylsulfanyl-N(6)-dimethylallyladenosine(37) in tRNA + (sulfur carrier)-H + 5'-deoxyadenosine + L-methionine + A + S-adenosyl-L-homocysteine + 2 H(+). Catalyzes the methylthiolation of N6-(dimethylallyl)adenosine (i(6)A), leading to the formation of 2-methylthio-N6-(dimethylallyl)adenosine (ms(2)i(6)A) at position 37 in tRNAs that read codons beginning with uridine. This is tRNA-2-methylthio-N(6)-dimethylallyladenosine synthase from Cellvibrio japonicus (strain Ueda107) (Pseudomonas fluorescens subsp. cellulosa).